The chain runs to 381 residues: Anhydro-N-acetylmuramic acid kinase (381 aa).

Glycine 13–aspartate 20 is an ATP binding site.

This sequence belongs to the anhydro-N-acetylmuramic acid kinase family.

The enzyme catalyses 1,6-anhydro-N-acetyl-beta-muramate + ATP + H2O = N-acetyl-D-muramate 6-phosphate + ADP + H(+). It participates in amino-sugar metabolism; 1,6-anhydro-N-acetylmuramate degradation. The protein operates within cell wall biogenesis; peptidoglycan recycling. Catalyzes the specific phosphorylation of 1,6-anhydro-N-acetylmuramic acid (anhMurNAc) with the simultaneous cleavage of the 1,6-anhydro ring, generating MurNAc-6-P. Is required for the utilization of anhMurNAc either imported from the medium or derived from its own cell wall murein, and thus plays a role in cell wall recycling. This Francisella tularensis subsp. novicida (strain U112) protein is Anhydro-N-acetylmuramic acid kinase.